Reading from the N-terminus, the 417-residue chain is Putative F-box protein At4g21240 (417 aa).

Residues methionine 1–glycine 12 show a composition bias toward acidic residues. A disordered region spans residues methionine 1–aspartate 25. A compositionally biased stretch (basic and acidic residues) spans lysine 16–aspartate 25. Positions glycine 30–phenylalanine 76 constitute an F-box domain.

This chain is Putative F-box protein At4g21240, found in Arabidopsis thaliana (Mouse-ear cress).